We begin with the raw amino-acid sequence, 382 residues long: Flavin-dependent monooxygenase, oxygenase subunit HsaA (382 aa).

Residues W72, 106–108, 129–131, R251, 334–335, and 356–357 each bind FMN; these read SSY, WSS, AT, and HA.

This sequence belongs to the HpaH/HsaA monooxygenase family. In terms of assembly, homotetramer. HsaAB monooxygenase consists of an oxygenase component HsaA and a reductase component HsaB.

The enzyme catalyses 3-hydroxy-9,10-secoandrosta-1,3,5(10)-triene-9,17-dione + FMNH2 + O2 = 3,4-dihydroxy-9,10-secoandrosta-1,3,5(10)-triene-9,17-dione + FMN + H2O + H(+). It participates in lipid metabolism; steroid biosynthesis. In terms of biological role, catalyzes the o-hydroxylation of 3-hydroxy-9,10-secoandrosta-1,3,5(10)-triene-9,17-dione (3-HSA) to 3,4-dihydroxy-9,10-secoandrosta-1,3,5(10)-triene-9,17-dione (3,4-DHSA) in the catabolism of cholesterol. The protein is Flavin-dependent monooxygenase, oxygenase subunit HsaA (hsaA) of Rhodococcus jostii (strain RHA1).